The following is a 185-amino-acid chain: Probable calcium-binding protein CML10 (185 aa).

A disordered region spans residues 1–41; sequence MVKIKMPALFRRRSGSKSPPLPQADPASGGGSPAPTPEEEM. 4 consecutive EF-hand domains span residues 36-71, 72-107, 110-145, and 146-181; these read TPEE…LGHA, ATDD…ASGD, AVEE…LGEK, and ATVQ…GGSF. Residues D49, N51, D53, R55, E60, D85, D87, D89, E96, D123, D125, N127, T129, E134, D159, N161, D163, and E170 each coordinate Ca(2+).

In terms of biological role, potential calcium sensor. The chain is Probable calcium-binding protein CML10 (CML10) from Oryza sativa subsp. japonica (Rice).